The chain runs to 496 residues: Probable glycine betaine transporter (496 aa).

12 helical membrane-spanning segments follow: residues 11–31 (TVLY…VFLP), 49–69 (FGWL…GIAI), 89–109 (FQWF…FWSV), 136–156 (VVFF…GLAL), 188–208 (AIDI…LGLG), 219–239 (IWGI…ITVI), 260–280 (VWLS…VFIL), 306–326 (WVGG…PFVG), 341–361 (FVFA…AIYG), 396–416 (LYAI…VGAA), 441–461 (FWGI…GTAA), and 468–488 (ASIA…YSIL).

The protein belongs to the BCCT transporter (TC 2.A.15) family.

Its subcellular location is the cell membrane. Its function is as follows. Probably acts in the uptake of glycine betaine. May function in the pathway that allows anaerobic methylotrophic growth of D.hafniense using glycine betaine. This chain is Probable glycine betaine transporter, found in Desulfitobacterium hafniense (strain Y51).